We begin with the raw amino-acid sequence, 92 residues long: YcgL domain-containing protein ASA_2166 (92 aa).

The 85-residue stretch at 1-85 (MLCAVYKSRK…PPENLLEQHK (85 aa)) folds into the YcgL domain.

The protein is YcgL domain-containing protein ASA_2166 of Aeromonas salmonicida (strain A449).